The primary structure comprises 261 residues: Cell division protein DivIB (261 aa).

At 1–27 (MEKGKVVVLEDRVPKLKERRRQKANRR) the chain is on the cytoplasmic side. A helical membrane pass occupies residues 28-48 (LIAYLSFFFLFILCVLYFQSP). Positions 47–117 (SPLGAVGHVE…PNTIAIHVRE (71 aa)) are alpha. Over 49 to 261 (LGAVGHVEVS…KEDGDETTSP (213 aa)) the chain is Extracellular. Residues 50-118 (GAVGHVEVSG…NTIAIHVREW (69 aa)) form the POTRA domain. Positions 118–230 (WRRIAYVYDR…YPAIAAALDR (113 aa)) are beta. A gamma region spans residues 231-260 (NVKGVIHLEVGSYFVPYSPPKKEDGDETTS).

The protein belongs to the FtsQ/DivIB family. DivIB subfamily.

It localises to the cell membrane. Functionally, cell division protein that may be involved in stabilizing or promoting the assembly of the division complex. The polypeptide is Cell division protein DivIB (Geobacillus kaustophilus (strain HTA426)).